A 107-amino-acid chain; its full sequence is Frataxin (107 aa).

This sequence belongs to the frataxin family. Monomer.

It is found in the cytoplasm. Promotes the assembly and repair of iron-sulfur clusters by delivering Fe(2+) to proteins involved in these pathways. In Trachipleistophora hominis (Microsporidian parasite), this protein is Frataxin (YFH1).